The primary structure comprises 83 residues: Large ribosomal subunit protein bL31B (83 aa).

This sequence belongs to the bacterial ribosomal protein bL31 family. Type B subfamily. As to quaternary structure, part of the 50S ribosomal subunit.

This is Large ribosomal subunit protein bL31B from Lacticaseibacillus casei (strain BL23) (Lactobacillus casei).